The primary structure comprises 511 residues: Cytochrome P450 monooxyhenase eriC (511 aa).

A helical membrane pass occupies residues 2 to 22 (VLADFISIPTVSIACLAVLGI). Cysteine 445 contributes to the heme binding site.

This sequence belongs to the cytochrome P450 family. It depends on heme as a cofactor.

It localises to the membrane. It catalyses the reaction erinacol + reduced [NADPH--hemoprotein reductase] + O2 = cyathadiol + oxidized [NADPH--hemoprotein reductase] + H2O + H(+). It participates in secondary metabolite biosynthesis. Its function is as follows. Cytochrome P450 monooxygenase; part of the gene cluster that mediates the biosynthesis of erinacines, cyathane-xylosides that show unique biological activities, including leishmanicidal activity, stimulating activity for nerve growth-factor synthesis, and agonistic activity toward the kappa opioid receptor. Within the pathway, eriC hydroxylates erinacol at C-15 of the seven-membered ring to yield cyathadiol. The first step of the erinacines biosynthesis pathway is catalyzed by the geranylgeranyl diphosphate (GGPP) synthase eriE via conversion of farnesyl pyrophosphate and isopentyl pyrophosphate into geranylgeranyl pyrophosphate (GGPP). GGPP is then substrate of the diterpene cyclase eriG for the production of cyatha-3,12-diene. The cytochrome P450 monooxygenase eriI then hydroxylates cyatha-3,12-diene at C-14 of the seven-membered ring to produce erinacol, which is further hydroxylated at C-15 by the cytochrome P450 monooxygenase eriC to yield cyathadiol. The cytochrome P450 monooxygenase eriA then catalyzes C-11 hydroxylation in the presence of the short chain dehydrogenase/reductase (SDR) eriH, which leads to the production of cyathatriol. The acetyltransferase eriL converts cyathatriol into 11-O-acetyl-cyathatriol. The SDR eriH catalyzes further oxidation of 11-O-acetyl-cyathatriol into 1-O-acetylcyathin A3. Finally, the glycosyl transferase eriJ tranfers xylose from UDP-xylose onto C-14 of 11-O-acetyl-cyathatriol to form eracine Q. EriJ is also able to convert 11-O-acetyl-cyathatriol to eracine Q2 by using UDP-D-glucose as cosubstrate, but at a lower rate. The chain is Cytochrome P450 monooxyhenase eriC from Hericium erinaceus (Lion's mane mushroom).